Consider the following 345-residue polypeptide: RNA polymerase II holoenzyme cyclin-like subunit (345 aa).

One can recognise a Cyclin N-terminal domain in the interval glutamine 53–serine 144. Residues glycine 256 to asparagine 285 form a disordered region.

This sequence belongs to the cyclin family. Cyclin C subfamily. As to quaternary structure, component of the srb8-11 complex, a regulatory module of the Mediator complex.

It is found in the nucleus. Component of the srb8-11 complex. The srb8-11 complex is a regulatory module of the Mediator complex which is itself involved in regulation of basal and activated RNA polymerase II-dependent transcription. The srb8-11 complex may be involved in the transcriptional repression of a subset of genes regulated by Mediator. It may inhibit the association of the Mediator complex with RNA polymerase II to form the holoenzyme complex. The srb8-11 complex phosphorylates the C-terminal domain (CTD) of the largest subunit of RNA polymerase II. This is RNA polymerase II holoenzyme cyclin-like subunit (ssn8) from Neurospora crassa (strain ATCC 24698 / 74-OR23-1A / CBS 708.71 / DSM 1257 / FGSC 987).